The sequence spans 200 residues: Large ribosomal subunit protein uL29 (200 aa).

The segment at 1–107 (MTIAKELKQK…KQETKKAEVK (107 aa)) is large ribosomal subunit protein uL29. The interval 92-200 (STKPESKQET…KMIKTKEKKQ (109 aa)) is disordered. A compositionally biased stretch (basic and acidic residues) spans 93–179 (TKPESKQETK…QEVKKVEAKK (87 aa)). The unknown stretch occupies residues 108-200 (PKVESKPESK…KMIKTKEKKQ (93 aa)). A compositionally biased stretch (basic residues) spans 186-200 (KPVKAKMIKTKEKKQ).

Belongs to the universal ribosomal protein uL29 family.

The chain is Large ribosomal subunit protein uL29 from Mycoplasma genitalium (strain ATCC 33530 / DSM 19775 / NCTC 10195 / G37) (Mycoplasmoides genitalium).